The primary structure comprises 289 residues: Fatty acid elongase 1 (289 aa).

7 helical membrane passes run 22–42 (VVGYISGIYLAFVFTGPKLFA), 72–92 (AMVLWNLSLSVFSIFGTSTVT), 123–143 (FWIGVFALSKIPELMDTIFLV), 152–172 (FLHWYHHVTVLLFSWHTYCVG), 177–197 (IWVAAMNYSVHSIMYLYFAIA), 208–228 (WAPYITILQILQMVMGCFVTL), and 251–271 (LLMYASYLYLFSEMFVKAHVL). Residues 154-158 (HWYHH) carry the HxxHH motif motif. The active-site Nucleophile is His-157. N-linked (GlcNAc...) asparagine glycosylation occurs at Asn-282.

The protein belongs to the ELO family.

It localises to the endoplasmic reticulum membrane. It catalyses the reaction an acyl-CoA + malonyl-CoA + H(+) = a 3-oxoacyl-CoA + CO2 + CoA. It functions in the pathway lipid metabolism; fatty acid biosynthesis. Involved in the synthesis of fatty acids. Elongates C4 fatty acids. Required for the normal mitochondrial function, energy metabolism and growth of epimastigotes. This chain is Fatty acid elongase 1, found in Trypanosoma cruzi (strain CL Brener).